The following is a 207-amino-acid chain: Guanylate kinase (207 aa).

The Guanylate kinase-like domain maps to Gly-4 to Arg-184. ATP is bound at residue Ala-11–Ser-18.

This sequence belongs to the guanylate kinase family.

Its subcellular location is the cytoplasm. It catalyses the reaction GMP + ATP = GDP + ADP. Its function is as follows. Essential for recycling GMP and indirectly, cGMP. In Vibrio vulnificus (strain CMCP6), this protein is Guanylate kinase.